A 445-amino-acid polypeptide reads, in one-letter code: Tubulin beta-1 chain (445 aa).

Positions 1–4 (MREI) match the MREI motif motif. The GTP site is built by Gln11, Glu69, Ser138, Gly142, Thr143, Gly144, Asn204, and Asn226. Glu69 contacts Mg(2+). The tract at residues 424-445 (QYQDATADEQGEFEEEGEEDEA) is disordered. Acidic residues predominate over residues 429–445 (TADEQGEFEEEGEEDEA). Glu438 bears the 5-glutamyl polyglutamate mark.

Belongs to the tubulin family. In terms of assembly, dimer of alpha and beta chains. A typical microtubule is a hollow water-filled tube with an outer diameter of 25 nm and an inner diameter of 15 nM. Alpha-beta heterodimers associate head-to-tail to form protofilaments running lengthwise along the microtubule wall with the beta-tubulin subunit facing the microtubule plus end conferring a structural polarity. Microtubules usually have 13 protofilaments but different protofilament numbers can be found in some organisms and specialized cells. It depends on Mg(2+) as a cofactor. In terms of processing, some glutamate residues at the C-terminus are polyglycylated, resulting in polyglycine chains on the gamma-carboxyl group. Glycylation is mainly limited to tubulin incorporated into axonemes (cilia and flagella) whereas glutamylation is prevalent in neuronal cells, centrioles, axonemes, and the mitotic spindle. Both modifications can coexist on the same protein on adjacent residues, and lowering polyglycylation levels increases polyglutamylation, and reciprocally. The precise function of polyglycylation is still unclear. Post-translationally, some glutamate residues at the C-terminus are polyglutamylated, resulting in polyglutamate chains on the gamma-carboxyl group. Polyglutamylation plays a key role in microtubule severing by spastin (SPAST). SPAST preferentially recognizes and acts on microtubules decorated with short polyglutamate tails: severing activity by SPAST increases as the number of glutamates per tubulin rises from one to eight, but decreases beyond this glutamylation threshold. As to expression, highly expressed in skeletal muscle.

It is found in the cytoplasm. The protein resides in the cytoskeleton. Its function is as follows. Tubulin is the major constituent of microtubules, a cylinder consisting of laterally associated linear protofilaments composed of alpha- and beta-tubulin heterodimers. Microtubules grow by the addition of GTP-tubulin dimers to the microtubule end, where a stabilizing cap forms. Below the cap, tubulin dimers are in GDP-bound state, owing to GTPase activity of alpha-tubulin. In Gallus gallus (Chicken), this protein is Tubulin beta-1 chain.